The primary structure comprises 246 residues: Biosynthetic peptidoglycan transglycosylase (246 aa).

Residues 28–48 form a helical membrane-spanning segment; sequence FALFLVLFLSSVVLFRFVPVP.

Belongs to the glycosyltransferase 51 family.

It is found in the cell inner membrane. The enzyme catalyses [GlcNAc-(1-&gt;4)-Mur2Ac(oyl-L-Ala-gamma-D-Glu-L-Lys-D-Ala-D-Ala)](n)-di-trans,octa-cis-undecaprenyl diphosphate + beta-D-GlcNAc-(1-&gt;4)-Mur2Ac(oyl-L-Ala-gamma-D-Glu-L-Lys-D-Ala-D-Ala)-di-trans,octa-cis-undecaprenyl diphosphate = [GlcNAc-(1-&gt;4)-Mur2Ac(oyl-L-Ala-gamma-D-Glu-L-Lys-D-Ala-D-Ala)](n+1)-di-trans,octa-cis-undecaprenyl diphosphate + di-trans,octa-cis-undecaprenyl diphosphate + H(+). It participates in cell wall biogenesis; peptidoglycan biosynthesis. In terms of biological role, peptidoglycan polymerase that catalyzes glycan chain elongation from lipid-linked precursors. This Pasteurella multocida (strain Pm70) protein is Biosynthetic peptidoglycan transglycosylase.